The primary structure comprises 458 residues: MVPAKKLKIAFVHPDLGIGGAERLVVDAALGLQEAGHEVIIYTSHCDKTHCFEEVKNGTLKVEVFGDFLPTDLGKRFFIVFANLRQLYLTAKVVLSGRSKDKDVFIIDQLSTCVPFFKLANNKVLFYCHFPDQLLAIRTNWIKSLYRIPFDLLEQFTMYCSDEVVVNSNFTKSMYKKTFKYLQKNPNVIYPCVDTDTETLINDRDMQIGNLLVGKCPNFYLSINRYERKKNIELAIQAFAKASVENTNLVVCGGYDPRIHENVQYLQELTCLCKELDLSYTVNHYSDFIEDSYSVNEIEKLFGAKVIFLTSISSSLKEFLIQNMQLLLYTPSYEHFGIVPLEAMKYGKPVLAVNNGGPVETVVSYQKEDNEKSTTGWLRSADADEWASALIESKEVLNQNPELFKNNGPKRVIELFSRKAMTQEFETNIKLALRHTSNISIIYVVSIIFAVLLKVFVF.

Residues N57 and N169 are each glycosylated (N-linked (GlcNAc...) asparagine). A helical membrane pass occupies residues 438–458; that stretch reads NISIIYVVSIIFAVLLKVFVF.

The protein belongs to the glycosyltransferase group 1 family.

The protein resides in the endoplasmic reticulum membrane. It catalyses the reaction a beta-D-Man-(1-&gt;4)-beta-D-GlcNAc-(1-&gt;4)-alpha-D-GlcNAc-diphospho-di-trans,poly-cis-dolichol + GDP-alpha-D-mannose = an alpha-D-Man-(1-&gt;3)-beta-D-Man-(1-&gt;4)-beta-D-GlcNAc-(1-&gt;4)-alpha-D-GlcNAc-diphospho-di-trans,poly-cis-dolichol + GDP + H(+). It carries out the reaction an alpha-D-Man-(1-&gt;3)-beta-D-Man-(1-&gt;4)-beta-D-GlcNAc-(1-&gt;4)-alpha-D-GlcNAc-diphospho-di-trans,poly-cis-dolichol + GDP-alpha-D-mannose = an alpha-D-Man-(1-&gt;3)-[alpha-D-Man-(1-&gt;6)]-beta-D-Man-(1-&gt;4)-beta-D-GlcNAc-(1-&gt;4)-alpha-D-GlcNAc-diphospho-di-trans,poly-cis-dolichol + GDP + H(+). The protein operates within protein modification; protein glycosylation. Its function is as follows. Mannosylates Man(2)GlcNAc(2)-dolichol diphosphate and Man(1)GlcNAc(2)-dolichol diphosphate to form Man(3)GlcNAc(2)-dolichol diphosphate. The sequence is that of Alpha-1,3/1,6-mannosyltransferase ALG2 (ALG2) from Candida glabrata (strain ATCC 2001 / BCRC 20586 / JCM 3761 / NBRC 0622 / NRRL Y-65 / CBS 138) (Yeast).